A 255-amino-acid chain; its full sequence is Triosephosphate isomerase (255 aa).

9 to 11 (NWK) lines the substrate pocket. H96 functions as the Electrophile in the catalytic mechanism. E168 (proton acceptor) is an active-site residue. 2 residues coordinate substrate: G174 and S213.

The protein belongs to the triosephosphate isomerase family. As to quaternary structure, homodimer.

It is found in the cytoplasm. It catalyses the reaction D-glyceraldehyde 3-phosphate = dihydroxyacetone phosphate. It participates in carbohydrate biosynthesis; gluconeogenesis. Its pathway is carbohydrate degradation; glycolysis; D-glyceraldehyde 3-phosphate from glycerone phosphate: step 1/1. Functionally, involved in the gluconeogenesis. Catalyzes stereospecifically the conversion of dihydroxyacetone phosphate (DHAP) to D-glyceraldehyde-3-phosphate (G3P). The sequence is that of Triosephosphate isomerase from Buchnera aphidicola subsp. Acyrthosiphon pisum (strain APS) (Acyrthosiphon pisum symbiotic bacterium).